A 147-amino-acid chain; its full sequence is Hemoglobin subunit beta-H0 (147 aa).

The 145-residue stretch at 3-147 (HFTAEEKAAI…VATALSHKYH (145 aa)) folds into the Globin domain. Residues H64 and H93 each contribute to the heme b site.

Belongs to the globin family. Heterotetramer of two alpha chains and two beta chains. As to expression, red blood cells.

Its function is as follows. This is a minor early embryonic beta chain. This chain is Hemoglobin subunit beta-H0 (Hbb-bh0), found in Mus musculus (Mouse).